A 294-amino-acid chain; its full sequence is Cytidine deaminase (294 aa).

CMP/dCMP-type deaminase domains are found at residues 48-168 and 186-294; these read DEDA…FGPK and VSGD…VLLG. 89-91 contacts substrate; it reads NME. His-102 lines the Zn(2+) pocket. Glu-104 serves as the catalytic Proton donor. Residues Cys-129 and Cys-132 each contribute to the Zn(2+) site.

This sequence belongs to the cytidine and deoxycytidylate deaminase family. As to quaternary structure, homodimer. Zn(2+) is required as a cofactor.

The catalysed reaction is cytidine + H2O + H(+) = uridine + NH4(+). It catalyses the reaction 2'-deoxycytidine + H2O + H(+) = 2'-deoxyuridine + NH4(+). This enzyme scavenges exogenous and endogenous cytidine and 2'-deoxycytidine for UMP synthesis. In Klebsiella pneumoniae subsp. pneumoniae (strain ATCC 700721 / MGH 78578), this protein is Cytidine deaminase.